We begin with the raw amino-acid sequence, 87 residues long: Small ribosomal subunit protein uS17 (87 aa).

It belongs to the universal ribosomal protein uS17 family. Part of the 30S ribosomal subunit.

One of the primary rRNA binding proteins, it binds specifically to the 5'-end of 16S ribosomal RNA. This is Small ribosomal subunit protein uS17 from Bacillus subtilis (strain 168).